The following is a 308-amino-acid chain: Zinc finger protein unc-98 (308 aa).

2 consecutive C2H2-type zinc fingers follow at residues Tyr-111–His-133 and Tyr-139–His-161. Residues Gly-166 to His-186 form a C2H2-type 3; degenerate zinc finger. A C2H2-type 4 zinc finger spans residues Tyr-244 to His-266.

It localises to the nucleus. The protein resides in the cytoplasm. In terms of biological role, probable transcription factor. Required for muscle structure. Its dual subcellular localization suggests that it may function both as a muscle adhesion complex protein and as a transcription factor, or work together with transcription factors, to influence gene expression. Thought to act as a molecular bridge between unc-97 and mhc-a at the M-line of muscles, possibly in a signaling role. The chain is Zinc finger protein unc-98 from Caenorhabditis briggsae.